We begin with the raw amino-acid sequence, 436 residues long: Septin-7 (436 aa).

The residue at position 2 (Ser2) is an N-acetylserine. A Phosphotyrosine modification is found at Tyr29. The region spanning 46-315 is the Septin-type G domain; it reads RGFEFTLMVV…ENYRSRKLAA (270 aa). The interaction with SEPTIN12 stretch occupies residues 46–316; sequence RGFEFTLMVV…NYRSRKLAAV (271 aa). Residues 56-63 are G1 motif; the sequence is GESGLGKS. 56–63 serves as a coordination point for GTP; it reads GESGLGKS. Ser76 is modified (phosphoserine). Residues Thr89, Gly115, and 194-202 contribute to the GTP site; that span reads KADTLTPEE. The tract at residues 112–115 is G3 motif; sequence DTPG. Residues 193–196 form a G4 motif region; it reads AKAD. Thr227 bears the Phosphothreonine mark. Gly249 and Arg264 together coordinate GTP. Residues 331 to 436 adopt a coiled-coil conformation; it reads TKSPLAQMEE…EKNKKKGKIF (106 aa). Ser333 carries the post-translational modification Phosphoserine. Lys372 is modified (N6-acetyllysine). A compositionally biased stretch (basic and acidic residues) spans 377 to 409; it reads ELQRRHEQMKKNLEAQHKELEEKRRQFEEEKAN. The segment at 377–436 is disordered; sequence ELQRRHEQMKKNLEAQHKELEEKRRQFEEEKANWEAQQRILEQQNSSRTLEKNKKKGKIF. Position 423 is a phosphoserine (Ser423). Thr425 carries the phosphothreonine modification.

Belongs to the TRAFAC class TrmE-Era-EngA-EngB-Septin-like GTPase superfamily. Septin GTPase family. As to quaternary structure, septins polymerize into heterooligomeric protein complexes that form filaments, and associate with cellular membranes, actin filaments and microtubules. GTPase activity is required for filament formation. Filaments are assembled from asymmetrical heterotrimers, composed of SEPTIN2, SEPTIN6 and SEPTIN7 that associate head-to-head to form a hexameric unit. Within the trimer, directly interacts with SEPTIN6, while interaction with SEPTIN2 seems indirect. In the absence of SEPTIN6, forms homodimers. Interacts directly with CENPE and links CENPE to septin filaments composed of SEPTIN2, SEPTIN6 and SEPTIN7. Interacts with SEPTIN5. Component of a septin core octameric complex consisting of SEPTIN12, SEPTIN7, SEPTIN6 and SEPTIN2 or SEPTIN4 in the order 12-7-6-2-2-6-7-12 or 12-7-6-4-4-6-7-12 and located in the sperm annulus; the SEPTIN12:SEPTIN7 association is mediated by the respective GTP-binding domains. Interacts with SEPTIN2, SEPTIN7, SEPTIN8, SEPTIN9 and SEPTIN11.

The protein resides in the cytoplasm. The protein localises to the chromosome. It localises to the centromere. It is found in the kinetochore. Its subcellular location is the cytoskeleton. The protein resides in the spindle. The protein localises to the cleavage furrow. It localises to the midbody. It is found in the cilium axoneme. Its subcellular location is the cell projection. The protein resides in the cilium. The protein localises to the flagellum. In terms of biological role, filament-forming cytoskeletal GTPase. Required for normal organization of the actin cytoskeleton. Required for normal progress through mitosis. Involved in cytokinesis. Required for normal association of CENPE with the kinetochore. Plays a role in ciliogenesis and collective cell movements. Forms a filamentous structure with SEPTIN12, SEPTIN6, SEPTIN2 and probably SEPTIN4 at the sperm annulus which is required for the structural integrity and motility of the sperm tail during postmeiotic differentiation. In Rattus norvegicus (Rat), this protein is Septin-7.